A 224-amino-acid chain; its full sequence is Histone H1.03 (224 aa).

2 stretches are compositionally biased toward low complexity: residues 1 to 22 (MAET…AKAA) and 30 to 42 (AAGG…PAGP). Disordered regions lie at residues 1–43 (MAET…AGPS) and 99–224 (QTKG…PKKK). One can recognise an H15 domain in the interval 40-113 (AGPSVTELIT…GASGSFRLSK (74 aa)). Basic residues-rich tracts occupy residues 122–137 (APKK…KPAA), 145–162 (KKPK…KAKK), 170–188 (KAAK…KKAV), and 197–224 (KAVK…PKKK).

This sequence belongs to the histone H1/H5 family.

It localises to the nucleus. It is found in the chromosome. Its function is as follows. Histones H1 are necessary for the condensation of nucleosome chains into higher-order structures. This is Histone H1.03 from Gallus gallus (Chicken).